Consider the following 501-residue polypeptide: Solute carrier family 2, facilitated glucose transporter member 5 (501 aa).

Residue Met1 is modified to N-acetylmethionine. Residues 1–18 (MEPQDPVKREGRLTPVIV) are Cytoplasmic-facing. The helical transmembrane segment at 19 to 39 (LATLIAAFGSSFQYGYNVAAI) threads the bilayer. D-fructose is bound at residue Tyr32. Residues 40 to 68 (NSPSEFMKDFYNYTYYDRVGEYMNEFYLT) are Extracellular-facing. The N-linked (GlcNAc...) asparagine glycan is linked to Asn51. The helical transmembrane segment at 69–91 (LLWSVTVSMFPFGGFLGSLMVGP) threads the bilayer. The Cytoplasmic portion of the chain corresponds to 92–98 (LVNNLGR). Residues 99–119 (KGTLLFNNIFSIVPALLMGFS) traverse the membrane as a helical segment. Topologically, residues 120 to 126 (ELAKSFE) are extracellular. The helical transmembrane segment at 127 to 149 (MIIVARVLVGICAGLSSNVVPMY) threads the bilayer. At 150 to 161 (LGELAPKNWRGA) the chain is on the cytoplasmic side. A helical membrane pass occupies residues 162 to 182 (LGVVPQLFITIGILVAQIFGL). Gln167 is a binding site for D-fructose. Residues 183–192 (RSLLANEEGW) are Extracellular-facing. The chain crosses the membrane as a helical span at residues 193–213 (PILLGLTGIPAVLQLLFLPFF). Residues 214-277 (PESPRYLLIQ…LFKMRSLRWQ (64 aa)) lie on the Cytoplasmic side of the membrane. A helical transmembrane segment spans residues 278-298 (VISIIVLMAGQQLSGVNAIYY). D-fructose contacts are provided by residues Gln288 and 296 to 298 (IYY). At 299–313 (YADQIYLSAGVNEDD) the chain is on the extracellular side. A helical transmembrane segment spans residues 314 to 334 (VQYVTAGTGAVNVLITVCAIF). Residues 335–342 (VVELMGRR) are Cytoplasmic-facing. The helical transmembrane segment at 343 to 363 (FLLLLGFSVCFTACCVLTGAL) threads the bilayer. The Extracellular segment spans residues 364–371 (ALQDVISW). The chain crosses the membrane as a helical span at residues 372–394 (MPYVSIACVISYVIGHALGPSPI). His387 provides a ligand contact to D-fructose. Residues 395 to 412 (PALLVTEIFLQSSRPAAY) lie on the Cytoplasmic side of the membrane. A helical membrane pass occupies residues 413 to 433 (MVAGTVHWLSNFTVGLVFPFI). 419 to 420 (HW) lines the D-fructose pocket. Over 434–439 (QVGLGA) the chain is Extracellular. Residues 440-460 (YSFVIFAVICLLTTVYIFLII) form a helical membrane-spanning segment. Residues 461-501 (PETKSKTFIEINRIFIKMNKVPGVHPEKEELKEFPPSTARQ) lie on the Cytoplasmic side of the membrane.

The protein belongs to the major facilitator superfamily. Sugar transporter (TC 2.A.1.1) family. Glucose transporter subfamily.

It is found in the apical cell membrane. The protein resides in the cell membrane. It localises to the sarcolemma. The catalysed reaction is D-fructose(out) = D-fructose(in). Functionally, functions as a fructose transporter that has only low activity with other monosaccharides. Can mediate the uptake of deoxyglucose, but with low efficiency. Essential for fructose uptake in the small intestine. Plays a role in the regulation of salt uptake and blood pressure in response to dietary fructose. Required for the development of high blood pressure in response to high dietary fructose intake. This is Solute carrier family 2, facilitated glucose transporter member 5 from Bos taurus (Bovine).